The primary structure comprises 106 residues: Large ribosomal subunit protein uL24 (106 aa).

This sequence belongs to the universal ribosomal protein uL24 family. Part of the 50S ribosomal subunit.

One of two assembly initiator proteins, it binds directly to the 5'-end of the 23S rRNA, where it nucleates assembly of the 50S subunit. In terms of biological role, one of the proteins that surrounds the polypeptide exit tunnel on the outside of the subunit. The protein is Large ribosomal subunit protein uL24 of Verminephrobacter eiseniae (strain EF01-2).